Consider the following 411-residue polypeptide: Peptidyl-prolyl cis-trans isomerase (411 aa).

An N-acetylserine modification is found at serine 2. 2 disordered regions span residues 54–127 and 160–302; these read IIKR…TLSP and NYVK…PKSK. Residues 61-87 show a composition bias toward acidic residues; that stretch reads FEDDDFLGGDFDEDEIDEESSEEEEEE. Phosphoserine occurs at positions 80 and 81. Position 89 is a phosphothreonine (threonine 89). 2 stretches are compositionally biased toward acidic residues: residues 103 to 118 and 173 to 242; these read ESED…DEFQ and EGED…EEQK. Residue tyrosine 184 is modified to Phosphotyrosine; by CK2. Serine 186 carries the phosphoserine; by CK2 modification. A compositionally biased stretch (basic residues) spans 251 to 260; it reads KSKKEKKRKH. The Nuclear localization signal signature appears at 256-271; that stretch reads KKRKHEEKEEEKKAKK. Basic and acidic residues predominate over residues 261-296; the sequence is EEKEEEKKAKKVKKVEFKKDLEEGPTKPKSKKEQDK. In terms of domain architecture, PPIase FKBP-type spans 324 to 411; it reads GARVGMRYIG…FDVKLVSMKN (88 aa).

Belongs to the FKBP-type PPIase family. FKBP3/4 subfamily. Interacts with NOP53. Phosphorylated at tyrosine and dephosphorylated by the phosphotyrosine-specific phosphoprotein phosphatase PTP1.

It is found in the nucleus. The protein resides in the nucleolus. The enzyme catalyses [protein]-peptidylproline (omega=180) = [protein]-peptidylproline (omega=0). Its activity is regulated as follows. Inhibited by both FK506 and rapamycin. Proline isomerase that belongs to an abundant class of enzymes that catalyze the cis-trans isomerization of X-Pro peptide bonds and can accelerate the refolding of proline-containing polypeptides. Specifically binds nuclear localization sequences. May be involved in the assembly or folding of ribosomal proteins. This is Peptidyl-prolyl cis-trans isomerase from Saccharomyces cerevisiae (strain ATCC 204508 / S288c) (Baker's yeast).